Consider the following 88-residue polypeptide: HssA/B-like protein 6 (88 aa).

The interval 1–22 is disordered; sequence MSILSALTSISNPMKSSNSNVA.

This sequence belongs to the hssA/B family.

This chain is HssA/B-like protein 6 (hssl6), found in Dictyostelium discoideum (Social amoeba).